The primary structure comprises 253 residues: Phosphate import ATP-binding protein PstB 1 (253 aa).

Residues 7 to 248 (LTVSDLSLYY…PEKQETSDYI (242 aa)) enclose the ABC transporter domain. Residue 39–46 (GPSGCGKS) participates in ATP binding.

Belongs to the ABC transporter superfamily. Phosphate importer (TC 3.A.1.7) family. As to quaternary structure, the complex is composed of two ATP-binding proteins (PstB), two transmembrane proteins (PstC and PstA) and a solute-binding protein (PstS).

The protein resides in the cell membrane. It carries out the reaction phosphate(out) + ATP + H2O = ADP + 2 phosphate(in) + H(+). Functionally, part of the ABC transporter complex PstSACB involved in phosphate import. Responsible for energy coupling to the transport system. In Lactococcus lactis subsp. lactis (strain IL1403) (Streptococcus lactis), this protein is Phosphate import ATP-binding protein PstB 1.